A 97-amino-acid chain; its full sequence is Defensin-like protein 196 (97 aa).

The first 28 residues, 1 to 28 (MAKMSALSIFAIFIILVLVIFEIPEIEA), serve as a signal peptide directing secretion. 4 cysteine pairs are disulfide-bonded: C33–C85, C46–C70, C55–C80, and C59–C82.

This sequence belongs to the DEFL family. Protease inhibitor I18 (RTI/MTI-2) subfamily.

The protein localises to the secreted. This Arabidopsis thaliana (Mouse-ear cress) protein is Defensin-like protein 196 (ATTI4).